Reading from the N-terminus, the 881-residue chain is MQDKYSPAEVEKSAHDHWQAIDAYKAVENAKDKNGKDKKKFYACSMLPYPSGKLHMGHVRNYTINDVMYRYLRMNGYNVLMPMGWDAFGMPAENAAMANNVPPAQWTYANIDYMKTQMASMGLAIDWSREMTACRPEYYKWNQWMFLKMLEKGIIYKKTGTVNWDPIDQTVLANEQVIDGRGWRSGALIEKREIPMYYARITDYAEELLDHVDNKLPGWPERVRIMQSNWIGKSTGVRFAFTHDIAEEGKLINDGKLWVFTTRADTIKGVTFCAVAPEHALATFAAKSNPELTDFIAECKLGSVIEADMATMEKKGMPTGLFVKHPLTGQLVEVWVGNYVLITYGDGAVMGVPAHDERDFAFAQKYVLPIHPVIDVPGKTFSDVAWHEWYGDKENGRCINSGKYDGLNYQQAVDAIAADLAELGLGEKKITYRLRDWGISRQRYWGTPIPIIHCKDCGDVPVPEKDLPVVLPEDCVPDGSGNPLNKHEKFLHVDCPQCGKPARRETDTMDTFVDSSWYYMRYCSPNSSDAMVDSRNDYWMPMDQYIGGIEHAVLHLLYARFWTKVMRDFGLVKFDEPFTNLLTQGMVLNETYFREDASGKKTWFNPADVQLQLDDKGRPVSAVLSSDGKAVEIGGTEKMSKSKNNGIDPQAQIDQYGADTARLFTMFASPPEQTLEWSGAGVEGANRFLRRVWAYGYNQAARVANASAFDFATLPEAHKALRRETHKILQQADNDYKRIQYNTVVSASMKMLNTLEAAKLDDSPASNAVISEGLSIFLRILNPVAPHITHALWQELGFAKDHGDILDAPWPQVDPAALEQAEIEMMIQVNGKLRGSIIVAKDADKASIEAAALANESVQKFIEGTPKKIIVVPGKLVNIVA.

The short motif at 48–58 (PYPSGKLHMGH) is the 'HIGH' region element. Residues 638–642 (KMSKS) carry the 'KMSKS' region motif. Lys-641 serves as a coordination point for ATP.

It belongs to the class-I aminoacyl-tRNA synthetase family.

Its subcellular location is the cytoplasm. It carries out the reaction tRNA(Leu) + L-leucine + ATP = L-leucyl-tRNA(Leu) + AMP + diphosphate. The sequence is that of Leucine--tRNA ligase from Janthinobacterium sp. (strain Marseille) (Minibacterium massiliensis).